The sequence spans 278 residues: Release factor glutamine methyltransferase (278 aa).

S-adenosyl-L-methionine is bound by residues 117–121, aspartate 140, and asparagine 184; that span reads GTGSG. 184-187 provides a ligand contact to substrate; it reads NPPY.

The protein belongs to the protein N5-glutamine methyltransferase family. PrmC subfamily.

It catalyses the reaction L-glutaminyl-[peptide chain release factor] + S-adenosyl-L-methionine = N(5)-methyl-L-glutaminyl-[peptide chain release factor] + S-adenosyl-L-homocysteine + H(+). In terms of biological role, methylates the class 1 translation termination release factors RF1/PrfA and RF2/PrfB on the glutamine residue of the universally conserved GGQ motif. This Bacteroides thetaiotaomicron (strain ATCC 29148 / DSM 2079 / JCM 5827 / CCUG 10774 / NCTC 10582 / VPI-5482 / E50) protein is Release factor glutamine methyltransferase.